The following is a 405-amino-acid chain: Potassium channel subfamily K member 18 (405 aa).

The chain crosses the membrane as a helical span at residues 43–63 (LPGLCFLCCLVTYALVGAALF). Residue Asn-94 is glycosylated (N-linked (GlcNAc...) asparagine). The segment at residues 125–151 (FLSALFFCCTVFSTVGYGHMYPVTRLG) is an intramembrane region (pore-forming). 4 residues coordinate K(+): Thr-138, Val-139, Gly-140, and Tyr-141. Positions 138 to 143 (TVGYGH) are selectivity filter 1. A helical membrane pass occupies residues 153–173 (FLCMLYALFGIPLMFLVLTDI). The interaction with calcineurin stretch occupies residues 221-226 (PQIVID). The segment at 272–277 (RSNSCP) is interaction with YWHAH. Phosphoserine is present on residues Ser-275 and Ser-287. The helical transmembrane segment at 304–324 (IPLPVIALVIFAYISCAAAIL) threads the bilayer. The segment at residues 337-351 (FYFCFVTLTTIGFGD) is an intramembrane region (pore-forming). The segment at 346-351 (TIGFGD) is selectivity filter 2. A helical membrane pass occupies residues 358 to 378 (HFFLFFSIYIIVGMEILFIAF).

The protein belongs to the two pore domain potassium channel (TC 1.A.1.8) family. Homodimer. Heterodimer with KCNK2. Heterodimer with KCNK10. Interacts with calcineurin. Interacts with YWHAH, in a phosphorylation-dependent manner. Phosphorylation of Ser-275 is required for the binding of 14-3-3eta/YWHAH. Calcineurin-mediated dephosphorylation of Ser-287 enhances channel activity. Post-translationally, N-glycosylated.

Its subcellular location is the cell membrane. It catalyses the reaction K(+)(in) = K(+)(out). Activated by volatile anesthetics, such as isoflurane and inhibited by local anesthetics such as bupivacaine and lidocaine. Inhibited by extracellular acidic pH. Inhibited by Zn(2+) ions. Functionally, k(+) channel that conducts outward and inward rectifying currents at depolarized and hyperpolarized membrane potentials, respectively. The outward rectifying currents are voltage-dependent, coupled to K(+) electrochemical gradient across the membrane, whereas the inward currents can be induced in response to activation of Ca(2+)-mobilizing receptors. Homo- and heterodimerizes to form functional channels with distinct regulatory and gating properties. In trigeminal ganglia sensory neurons, the heterodimers of KCNK18/TRESK and KCNK2/TREK-1 or KCNK10/TREK-2 inhibit neuronal firing and neurogenic inflammation by stabilizing the resting membrane potential at K(+) equilibrium potential as well as by regulating the threshold of action potentials and the spike frequency. In thymocytes, conducts K(+) currents upon T cell receptor (TCR) signaling leading to sustained Ca(2+) influx and NF-kappa-B activation, FOXP3 transcription and positive selection of regulatory T cell (Treg) progenitor subsets. Appears to mediate the analgesics effects of hydroxy-alpha-sanshool, a metabolite naturally present in Schezuan pepper and other Xanthoxylum plants. In Rattus norvegicus (Rat), this protein is Potassium channel subfamily K member 18 (Kcnk18).